We begin with the raw amino-acid sequence, 556 residues long: Undecaprenyl phosphate-alpha-4-amino-4-deoxy-L-arabinose arabinosyl transferase (556 aa).

The next 10 helical transmembrane spans lie at 88–108 (FASV…AMML), 116–136 (LLAA…TYSV), 179–199 (FMTK…PVAL), 207–227 (LLLF…PWAL), 258–278 (APFW…LALL), 296–316 (FFLL…KGKL), 319–339 (YILP…SGLA), 355–375 (IVFG…IIVP), 384–404 (LTII…AVSL), and 410–430 (WGYL…GSIP).

This sequence belongs to the glycosyltransferase 83 family.

It localises to the cell inner membrane. It carries out the reaction 4-amino-4-deoxy-alpha-L-arabinopyranosyl di-trans,octa-cis-undecaprenyl phosphate + lipid IVA = lipid IIA + di-trans,octa-cis-undecaprenyl phosphate.. It participates in lipopolysaccharide metabolism; 4-amino-4-deoxy-beta-L-arabinose-lipid A biosynthesis. Its function is as follows. Catalyzes the transfer of the L-Ara4N moiety of the glycolipid undecaprenyl phosphate-alpha-L-Ara4N to lipid A. The modified arabinose is attached to lipid A and is required for resistance to polymyxin and cationic antimicrobial peptides. The polypeptide is Undecaprenyl phosphate-alpha-4-amino-4-deoxy-L-arabinose arabinosyl transferase (Pectobacterium atrosepticum (strain SCRI 1043 / ATCC BAA-672) (Erwinia carotovora subsp. atroseptica)).